The primary structure comprises 118 residues: uncharacterized protein (118 aa).

This is an uncharacterized protein from Bacillus subtilis (strain 168).